The sequence spans 230 residues: Large ribosomal subunit protein uL1 (230 aa).

This sequence belongs to the universal ribosomal protein uL1 family. In terms of assembly, part of the 50S ribosomal subunit.

Binds directly to 23S rRNA. The L1 stalk is quite mobile in the ribosome, and is involved in E site tRNA release. Functionally, protein L1 is also a translational repressor protein, it controls the translation of the L11 operon by binding to its mRNA. The protein is Large ribosomal subunit protein uL1 of Nitrosospira multiformis (strain ATCC 25196 / NCIMB 11849 / C 71).